The chain runs to 239 residues: Ribulose-1,5-bisphosphate 5-phosphatase (239 aa).

The active-site Nucleophile is the D8. The Mg(2+) site is built by D8, D10, and D184. Catalysis depends on D10, which acts as the Proton donor. Positions 205–239 (PSEESDATESADRAATERQADHSIDTLGELTDLVS) are disordered. The segment covering 214–228 (SADRAATERQADHSI) has biased composition (basic and acidic residues).

This sequence belongs to the HAD-like hydrolase superfamily. Mg(2+) is required as a cofactor. Mn(2+) serves as cofactor. The cofactor is Co(2+). Requires Ni(2+) as cofactor.

It carries out the reaction D-ribulose 1,5-bisphosphate + H2O = D-ribulose 1-phosphate + phosphate. Its activity is regulated as follows. Requires both monovalent and divalent ions for optimal activity. Optimal KCl concentration is higher than 2.5 M. Phosphatase involved in the non-carboxylating pentose bisphosphate pathway, a nucleoside degradation pathway present in some halophilic archaea. Catalyzes the dephosphorylation of ribulose 1,5-bisphosphate (RuBP) to ribulose 1-phosphate (Ru1P). Shows a strict substrate specificity toward RuBP. The chain is Ribulose-1,5-bisphosphate 5-phosphatase from Halopiger xanaduensis (strain DSM 18323 / JCM 14033 / SH-6).